A 666-amino-acid chain; its full sequence is Zinc finger protein 710 (666 aa).

Residues Lys110 and Lys113 each participate in a glycyl lysine isopeptide (Lys-Gly) (interchain with G-Cter in SUMO2) cross-link. The disordered stretch occupies residues 113 to 141; the sequence is KAEEEEEQEVYEVSVPGDDKDPGPAEAPA. 3 consecutive C2H2-type zinc fingers follow at residues 297 to 319, 325 to 347, and 353 to 375; these read WQCRMCEKSYTSKYNLVTHILGH, HSCPHCSKLFKQPSHLQTHLLTH, and HKCQVCHKAFTQTSHLKRHMLLH. Lys379 participates in a covalent cross-link: Glycyl lysine isopeptide (Lys-Gly) (interchain with G-Cter in SUMO2). C2H2-type zinc fingers lie at residues 381–403, 409–431, 437–459, 465–487, 493–515, 521–543, 549–571, and 577–600; these read YSCHFCGRGFAYPSELKAHEVKH, HVCVECGLDFSTLTQLKRHLASH, YQCLECDKSFHYRSQLQNHMLKH, FVCTECGMEFSQIHHLKQHSLTH, FKCEVCGREFTLQANMKRHMLIH, YQCHICFKTFVQKQTLKTHMIVH, FKCKVCGKSFNRMYNLLGHMHLH, and FKCPYCSSKFNLKGNLSRHMKVKH.

It belongs to the krueppel C2H2-type zinc-finger protein family.

It is found in the nucleus. In terms of biological role, may be involved in transcriptional regulation. The sequence is that of Zinc finger protein 710 (Znf710) from Mus musculus (Mouse).